The chain runs to 112 residues: 2Fe-2S ferredoxin (112 aa).

The 2Fe-2S ferredoxin-type domain occupies isoleucine 5–threonine 107. [2Fe-2S] cluster contacts are provided by cysteine 42, cysteine 48, cysteine 51, and cysteine 88.

It belongs to the adrenodoxin/putidaredoxin family. It depends on [2Fe-2S] cluster as a cofactor.

Functionally, ferredoxin are iron-sulfur proteins that transfer electrons in a wide variety of metabolic reactions. The polypeptide is 2Fe-2S ferredoxin (fdxB) (Rickettsia montanensis).